Here is a 147-residue protein sequence, read N- to C-terminus: Male-specific protein scotti (147 aa).

The tract at residues 57–76 is disordered; that stretch reads EPPLGVFPAQGGPNGPPRLR. A glycan (N-linked (GlcNAc...) asparagine) is linked at Asn128.

Belongs to the male-specific scotti family.

Post-meiotically transcribed gene that has a role in late spermiogenesis; required for actin cone progression during spermatid individualization. The chain is Male-specific protein scotti from Drosophila simulans (Fruit fly).